The chain runs to 122 residues: Large ribosomal subunit protein uL14 (122 aa).

This sequence belongs to the universal ribosomal protein uL14 family. Part of the 50S ribosomal subunit. Forms a cluster with proteins L3 and L19. In the 70S ribosome, L14 and L19 interact and together make contacts with the 16S rRNA in bridges B5 and B8.

Functionally, binds to 23S rRNA. Forms part of two intersubunit bridges in the 70S ribosome. The sequence is that of Large ribosomal subunit protein uL14 from Buchnera aphidicola subsp. Schizaphis graminum (strain Sg).